The following is a 305-amino-acid chain: Porphobilinogen deaminase (305 aa).

Cys243 is subject to S-(dipyrrolylmethanemethyl)cysteine.

The protein belongs to the HMBS family. As to quaternary structure, monomer. It depends on dipyrromethane as a cofactor.

The catalysed reaction is 4 porphobilinogen + H2O = hydroxymethylbilane + 4 NH4(+). It functions in the pathway porphyrin-containing compound metabolism; protoporphyrin-IX biosynthesis; coproporphyrinogen-III from 5-aminolevulinate: step 2/4. Its function is as follows. Tetrapolymerization of the monopyrrole PBG into the hydroxymethylbilane pre-uroporphyrinogen in several discrete steps. The polypeptide is Porphobilinogen deaminase (Limosilactobacillus reuteri (strain DSM 20016) (Lactobacillus reuteri)).